A 614-amino-acid chain; its full sequence is Acetylcholinesterase (614 aa).

The first 31 residues, 1–31 (MRPPWYPLHTPSLASPLLFLLLSLLGGGARA), serve as a signal peptide directing secretion. Cys-100 and Cys-127 form a disulfide bridge. Ser-234 (acyl-ester intermediate) is an active-site residue. An intrachain disulfide couples Cys-288 to Cys-303. N-linked (GlcNAc...) asparagine glycosylation occurs at Asn-296. The active-site Charge relay system is Glu-365. Asn-381 carries N-linked (GlcNAc...) asparagine glycosylation. Cys-440 and Cys-560 are oxidised to a cystine. Residue His-478 is the Charge relay system of the active site. An N-linked (GlcNAc...) asparagine glycan is attached at Asn-495.

The protein belongs to the type-B carboxylesterase/lipase family. As to quaternary structure, homotetramer; composed of disulfide-linked homodimers. Catalytic forms H (GPI-anchor dimer) and T (asymmetric collagen-tailed), which differ in their C-terminus, account for all types of known ACHE forms. Interacts with PRIMA1. The interaction with PRIMA1 is required to anchor it to the basal lamina of cells and organize into tetramers. In terms of tissue distribution, has been found in central nervous system and muscle. Found in embryonic liver and spleen but not in adult liver.

It localises to the synapse. It is found in the secreted. Its subcellular location is the cell membrane. It carries out the reaction acetylcholine + H2O = choline + acetate + H(+). Functionally, terminates signal transduction at the neuromuscular junction by rapid hydrolysis of the acetylcholine released into the synaptic cleft. The sequence is that of Acetylcholinesterase (Ache) from Rattus norvegicus (Rat).